The primary structure comprises 254 residues: Coproheme decarboxylase (254 aa).

Residues R136, 150-154 (YPMDK), H177, Q190, and S228 contribute to the Fe-coproporphyrin III site. Y150 is an active-site residue.

The protein belongs to the ChdC family. Type 1 subfamily. Fe-coproporphyrin III serves as cofactor.

It carries out the reaction Fe-coproporphyrin III + 2 H2O2 + 2 H(+) = heme b + 2 CO2 + 4 H2O. The enzyme catalyses Fe-coproporphyrin III + H2O2 + H(+) = harderoheme III + CO2 + 2 H2O. It catalyses the reaction harderoheme III + H2O2 + H(+) = heme b + CO2 + 2 H2O. It participates in porphyrin-containing compound metabolism; protoheme biosynthesis. Functionally, involved in coproporphyrin-dependent heme b biosynthesis. Catalyzes the decarboxylation of Fe-coproporphyrin III (coproheme) to heme b (protoheme IX), the last step of the pathway. The reaction occurs in a stepwise manner with a three-propionate intermediate. The protein is Coproheme decarboxylase of Bacillus licheniformis (strain ATCC 14580 / DSM 13 / JCM 2505 / CCUG 7422 / NBRC 12200 / NCIMB 9375 / NCTC 10341 / NRRL NRS-1264 / Gibson 46).